A 560-amino-acid chain; its full sequence is Membrane protein insertase YidC (560 aa).

The next 6 helical transmembrane spans lie at 5–25, 334–354, 357–377, 431–451, 476–496, and 522–542; these read IINL…WQYF, AIDF…MNFF, YVGN…LLMF, LPIL…YVTI, LFGL…WPIL, and FMPL…LIYW.

It belongs to the OXA1/ALB3/YidC family. Type 1 subfamily. Interacts with the Sec translocase complex via SecD. Specifically interacts with transmembrane segments of nascent integral membrane proteins during membrane integration.

Its subcellular location is the cell inner membrane. Functionally, required for the insertion and/or proper folding and/or complex formation of integral membrane proteins into the membrane. Involved in integration of membrane proteins that insert both dependently and independently of the Sec translocase complex, as well as at least some lipoproteins. Aids folding of multispanning membrane proteins. The polypeptide is Membrane protein insertase YidC (Rickettsia felis (strain ATCC VR-1525 / URRWXCal2) (Rickettsia azadi)).